The following is a 207-amino-acid chain: Protein 6b (207 aa).

A disordered region spans residues 161–185 (NTLEEGEDDDDEMDDEGEAGGAEPR). Positions 164–178 (EEGEDDDDEMDDEGE) are enriched in acidic residues.

Functionally, involved in tumor formation and increases auxin and cytokinin effects in host plants. The protein is Protein 6b (6b) of Agrobacterium tumefaciens (strain 15955).